The primary structure comprises 152 residues: Small ribosomal subunit protein bS6 (152 aa).

Residues 96-152 (HEEGPSAMLQKRDRDDRGPREGGDRGPRREFGDRPPRRDGDFQRGPRPDRAPREDRA) are disordered.

This sequence belongs to the bacterial ribosomal protein bS6 family.

Binds together with bS18 to 16S ribosomal RNA. The chain is Small ribosomal subunit protein bS6 from Rhizobium etli (strain ATCC 51251 / DSM 11541 / JCM 21823 / NBRC 15573 / CFN 42).